We begin with the raw amino-acid sequence, 368 residues long: UDP-N-acetylglucosamine--N-acetylmuramyl-(pentapeptide) pyrophosphoryl-undecaprenol N-acetylglucosamine transferase (368 aa).

Residues 11–13 (TGG), asparagine 123, arginine 164, serine 188, isoleucine 250, and glutamine 295 each bind UDP-N-acetyl-alpha-D-glucosamine.

The protein belongs to the glycosyltransferase 28 family. MurG subfamily.

It is found in the cell inner membrane. It catalyses the reaction di-trans,octa-cis-undecaprenyl diphospho-N-acetyl-alpha-D-muramoyl-L-alanyl-D-glutamyl-meso-2,6-diaminopimeloyl-D-alanyl-D-alanine + UDP-N-acetyl-alpha-D-glucosamine = di-trans,octa-cis-undecaprenyl diphospho-[N-acetyl-alpha-D-glucosaminyl-(1-&gt;4)]-N-acetyl-alpha-D-muramoyl-L-alanyl-D-glutamyl-meso-2,6-diaminopimeloyl-D-alanyl-D-alanine + UDP + H(+). Its pathway is cell wall biogenesis; peptidoglycan biosynthesis. Cell wall formation. Catalyzes the transfer of a GlcNAc subunit on undecaprenyl-pyrophosphoryl-MurNAc-pentapeptide (lipid intermediate I) to form undecaprenyl-pyrophosphoryl-MurNAc-(pentapeptide)GlcNAc (lipid intermediate II). This is UDP-N-acetylglucosamine--N-acetylmuramyl-(pentapeptide) pyrophosphoryl-undecaprenol N-acetylglucosamine transferase from Solidesulfovibrio magneticus (strain ATCC 700980 / DSM 13731 / RS-1) (Desulfovibrio magneticus).